The chain runs to 1088 residues: Protein unc-13 homolog D (1088 aa).

The disordered stretch occupies residues 26 to 46; sequence VRDLQDPPPQATPEVQVQSHH. Positions 92 to 239 constitute a C2 1 domain; the sequence is QPEEHQQMLQ…FKEARKDKGQ (148 aa). Ca(2+) is bound by residues aspartate 127 and aspartate 133. Residue serine 150 is modified to Phosphoserine. Positions 206 and 208 each coordinate Ca(2+). An interaction with RAB27A region spans residues 240–543; that stretch reads DDFLGNVMLR…AKRVQDHTAA (304 aa). One can recognise an MHD1 domain in the interval 557–675; it reads FQLYVSLREF…RLALVYCSLI (119 aa). An MHD2 domain is found at 786–893; that stretch reads EDAILPLMKF…ASSRELIQKY (108 aa). One can recognise a C2 2 domain in the interval 908-1033; sequence RLGAVTVKAS…PGLTGCVEPG (126 aa). Ca(2+) contacts are provided by leucine 938, aspartate 939, aspartate 945, aspartate 1003, aspartate 1005, and aspartate 1011.

The protein belongs to the unc-13 family. As to quaternary structure, interacts with RAB27A and DOC2A. Interacts with RhoG; the interaction increases RhoG affinity to the membrane lipids, targets Unc13d to membrane lipids and facilitates cytotoxic granule (CG) docking to the plasma membrane. It depends on Ca(2+) as a cofactor. Expressed in lung bronchial epithelium goblet/mucous cells. Also expressed in spleen and testis. Expressed at very low levels in heart muscle, kidney, liver, brain and skeletal muscle.

It is found in the cytoplasm. The protein resides in the membrane. It localises to the late endosome. Its subcellular location is the recycling endosome. The protein localises to the lysosome. Functionally, plays a role in cytotoxic granule exocytosis in lymphocytes. Required for both granule maturation and granule docking and priming at the immunologic synapse. Regulates assembly of recycling and late endosomal structures, leading to the formation of an endosomal exocytic compartment that fuses with perforin-containing granules at the immunologic synapse and licences them for exocytosis. Regulates Ca(2+)-dependent secretory lysosome exocytosis in mast cells. This is Protein unc-13 homolog D (Unc13d) from Rattus norvegicus (Rat).